The chain runs to 434 residues: Methylenetetrahydrofolate--tRNA-(uracil-5-)-methyltransferase TrmFO (434 aa).

8 to 13 (GAGLAG) lines the FAD pocket.

The protein belongs to the MnmG family. TrmFO subfamily. FAD serves as cofactor.

It is found in the cytoplasm. The catalysed reaction is uridine(54) in tRNA + (6R)-5,10-methylene-5,6,7,8-tetrahydrofolate + NADH + H(+) = 5-methyluridine(54) in tRNA + (6S)-5,6,7,8-tetrahydrofolate + NAD(+). The enzyme catalyses uridine(54) in tRNA + (6R)-5,10-methylene-5,6,7,8-tetrahydrofolate + NADPH + H(+) = 5-methyluridine(54) in tRNA + (6S)-5,6,7,8-tetrahydrofolate + NADP(+). Functionally, catalyzes the folate-dependent formation of 5-methyl-uridine at position 54 (M-5-U54) in all tRNAs. This is Methylenetetrahydrofolate--tRNA-(uracil-5-)-methyltransferase TrmFO from Exiguobacterium sibiricum (strain DSM 17290 / CCUG 55495 / CIP 109462 / JCM 13490 / 255-15).